Here is a 376-residue protein sequence, read N- to C-terminus: Putative transmembrane protein 183BP (376 aa).

2 disordered regions span residues 1–20 (MARG…AMPK) and 102–127 (AQEE…ELDG). The chain crosses the membrane as a helical span at residues 300 to 320 (LNFIFIPIVMGMIFTLFTINV).

This sequence belongs to the TMEM183 family. As to expression, expressed in brain, lung, pancreas, thymus, intestine and blood. Not detected in heart, placenta, liver, muscle, kidney, spleen, prostate, testis, ovary and colon.

The protein resides in the membrane. This is Putative transmembrane protein 183BP from Homo sapiens (Human).